A 434-amino-acid chain; its full sequence is UDP-N-acetylmuramate--L-alanine ligase (434 aa).

108 to 114 (GSHGKTT) serves as a coordination point for ATP.

This sequence belongs to the MurCDEF family.

Its subcellular location is the cytoplasm. The enzyme catalyses UDP-N-acetyl-alpha-D-muramate + L-alanine + ATP = UDP-N-acetyl-alpha-D-muramoyl-L-alanine + ADP + phosphate + H(+). Its pathway is cell wall biogenesis; peptidoglycan biosynthesis. Functionally, cell wall formation. The polypeptide is UDP-N-acetylmuramate--L-alanine ligase (Geobacillus thermodenitrificans (strain NG80-2)).